The primary structure comprises 718 residues: Ribosome-releasing factor 2, mitochondrial (718 aa).

A mitochondrion-targeting transit peptide spans 1 to 29; that stretch reads MLKCAWQNGPRQSNRWLWQLSNQIWKRSY. Residues 31–310 enclose the tr-type G domain; it reads SKIRNIGILA…AVNSYLPAPE (280 aa). GTP-binding positions include 40–47, 104–108, and 158–161; these read AHIDAGKT, DTPGH, and NKMD.

It belongs to the TRAFAC class translation factor GTPase superfamily. Classic translation factor GTPase family. EF-G/EF-2 subfamily.

The protein resides in the mitochondrion. Mitochondrial GTPase that mediates the disassembly of ribosomes from messenger RNA at the termination of mitochondrial protein biosynthesis. Not involved in the GTP-dependent ribosomal translocation step during translation elongation. In Drosophila erecta (Fruit fly), this protein is Ribosome-releasing factor 2, mitochondrial.